A 141-amino-acid polypeptide reads, in one-letter code: Lutropin subunit beta (141 aa).

An N-terminal signal peptide occupies residues 1–20 (MEMFQGLLLWLLLGVAGVWA). 6 cysteine pairs are disulfide-bonded: C29–C77, C43–C92, C46–C130, C54–C108, C58–C110, and C113–C120. N33 is a glycosylation site (N-linked (GlcNAc...) asparagine).

It belongs to the glycoprotein hormones subunit beta family. As to quaternary structure, heterodimer of a common alpha chain and a unique beta chain which confers biological specificity to thyrotropin, lutropin, follitropin and gonadotropin.

The protein resides in the secreted. Its function is as follows. Promotes spermatogenesis and ovulation by stimulating the testes and ovaries to synthesize steroids. The chain is Lutropin subunit beta (LHB) from Bos taurus (Bovine).